The following is a 139-amino-acid chain: Probable transcription termination protein NusA (139 aa).

Residues 31 to 97 form the KH domain; that stretch reads DDRVVYVVTA…YNVTVSENDT (67 aa).

It belongs to the NusA family.

The protein localises to the cytoplasm. Functionally, participates in transcription termination. This is Probable transcription termination protein NusA from Halobacterium salinarum (strain ATCC 29341 / DSM 671 / R1).